Consider the following 56-residue polypeptide: Secreted virulence factor CLU5a (56 aa).

The signal sequence occupies residues 1-18 (MKVSLTLLATLCASLASA).

This sequence belongs to the MC69 virulence factor family. As to quaternary structure, homodimer; disulfide-linked. Dimerization can possibly extend to multimerisation.

Its subcellular location is the secreted. Secreted protein required for appressorial penetration of intact host epidermal cells and for pathogenicit, but not for subsequent biotrophic and necrotrophic colonization of leaves. The protein is Secreted virulence factor CLU5a of Colletotrichum graminicola (strain M1.001 / M2 / FGSC 10212) (Maize anthracnose fungus).